A 126-amino-acid chain; its full sequence is Aspartate 1-decarboxylase (126 aa).

Serine 25 acts as the Schiff-base intermediate with substrate; via pyruvic acid in catalysis. Serine 25 is modified (pyruvic acid (Ser)). Threonine 57 is a binding site for substrate. Tyrosine 58 functions as the Proton donor in the catalytic mechanism. 72–74 (GAA) is a substrate binding site.

The protein belongs to the PanD family. As to quaternary structure, heterooctamer of four alpha and four beta subunits. The cofactor is pyruvate. Post-translationally, is synthesized initially as an inactive proenzyme, which is activated by self-cleavage at a specific serine bond to produce a beta-subunit with a hydroxyl group at its C-terminus and an alpha-subunit with a pyruvoyl group at its N-terminus.

The protein localises to the cytoplasm. It catalyses the reaction L-aspartate + H(+) = beta-alanine + CO2. It functions in the pathway cofactor biosynthesis; (R)-pantothenate biosynthesis; beta-alanine from L-aspartate: step 1/1. In terms of biological role, catalyzes the pyruvoyl-dependent decarboxylation of aspartate to produce beta-alanine. The chain is Aspartate 1-decarboxylase from Campylobacter jejuni subsp. jejuni serotype O:6 (strain 81116 / NCTC 11828).